The following is a 309-amino-acid chain: Biotin synthase (309 aa).

A Radical SAM core domain is found at 35-259 (NKIQISSLLS…MIPKSYIRLS (225 aa)). Residues C50, C54, and C57 each contribute to the [4Fe-4S] cluster site. [2Fe-2S] cluster contacts are provided by C94, C125, C185, and R257.

The protein belongs to the radical SAM superfamily. Biotin synthase family. In terms of assembly, homodimer. [4Fe-4S] cluster is required as a cofactor. [2Fe-2S] cluster serves as cofactor.

It carries out the reaction (4R,5S)-dethiobiotin + (sulfur carrier)-SH + 2 reduced [2Fe-2S]-[ferredoxin] + 2 S-adenosyl-L-methionine = (sulfur carrier)-H + biotin + 2 5'-deoxyadenosine + 2 L-methionine + 2 oxidized [2Fe-2S]-[ferredoxin]. Its pathway is cofactor biosynthesis; biotin biosynthesis; biotin from 7,8-diaminononanoate: step 2/2. Its function is as follows. Catalyzes the conversion of dethiobiotin (DTB) to biotin by the insertion of a sulfur atom into dethiobiotin via a radical-based mechanism. This Rickettsia felis (strain ATCC VR-1525 / URRWXCal2) (Rickettsia azadi) protein is Biotin synthase.